The chain runs to 378 residues: MTERECRLALSQARRLVIKVGTSTLTHKTGKLNLGRMERLVRELVDQVNAGRQVVLVTSGAVGAGMGRLGLKEKPRTLPEKQAAAAVGQGLLMHMYEKFFSDYGLLVAQVLLTRADLADRSRYLNSRHTLAALLRLGVVPIVNENDTVAVEEIRVGDNDTLSALVAGLVDADILFLLTDTGGLFTANPVTSDDAVLLPCVTEITPEIEALAGGAGSTWSTGGMATKIQAARLATSFGIPVVIASGLQAGQIEAVLKGEEIGTIFLPREHRAHTRKRWLAYAPAVQGQIQVDAGAARAICKNGKSLLPGGVIAVDGDFDQGAIVSIVDPAGKEIARGMANYPAAAISRIKGRKTGEIGEILGYKDYDEIVHRDNLIVLG.

Lys19 contributes to the ATP binding site. 3 residues coordinate substrate: Ser59, Asp146, and Asn158. ATP contacts are provided by residues 178 to 179 (TD) and 220 to 226 (TGGMATK). One can recognise a PUA domain in the interval 285–363 (QGQIQVDAGA…GEIGEILGYK (79 aa)).

This sequence belongs to the glutamate 5-kinase family.

It is found in the cytoplasm. The enzyme catalyses L-glutamate + ATP = L-glutamyl 5-phosphate + ADP. The protein operates within amino-acid biosynthesis; L-proline biosynthesis; L-glutamate 5-semialdehyde from L-glutamate: step 1/2. Its function is as follows. Catalyzes the transfer of a phosphate group to glutamate to form L-glutamate 5-phosphate. This chain is Glutamate 5-kinase, found in Moorella thermoacetica (strain ATCC 39073 / JCM 9320).